The following is a 393-amino-acid chain: S-adenosylmethionine synthase (393 aa).

Residue H16 participates in ATP binding. Mg(2+) is bound at residue D18. E44 is a binding site for K(+). Residues E57 and Q100 each contribute to the L-methionine site. The tract at residues 100–110 (QSNDIAQGVDH) is flexible loop. Residues 167–169 (DAK), 238–239 (RF), D247, 253–254 (RK), A270, and K274 contribute to the ATP site. L-methionine is bound at residue D247. K278 contributes to the L-methionine binding site.

It belongs to the AdoMet synthase family. As to quaternary structure, homotetramer; dimer of dimers. Mg(2+) is required as a cofactor. The cofactor is K(+).

Its subcellular location is the cytoplasm. It catalyses the reaction L-methionine + ATP + H2O = S-adenosyl-L-methionine + phosphate + diphosphate. It functions in the pathway amino-acid biosynthesis; S-adenosyl-L-methionine biosynthesis; S-adenosyl-L-methionine from L-methionine: step 1/1. In terms of biological role, catalyzes the formation of S-adenosylmethionine (AdoMet) from methionine and ATP. The overall synthetic reaction is composed of two sequential steps, AdoMet formation and the subsequent tripolyphosphate hydrolysis which occurs prior to release of AdoMet from the enzyme. The protein is S-adenosylmethionine synthase of Leptothrix cholodnii (strain ATCC 51168 / LMG 8142 / SP-6) (Leptothrix discophora (strain SP-6)).